Here is a 98-residue protein sequence, read N- to C-terminus: Large ribosomal subunit protein bL25 (98 aa).

Residues 1 to 23 (MANFVLNAQARAEDKQGKGASRR) form a disordered region.

This sequence belongs to the bacterial ribosomal protein bL25 family. Part of the 50S ribosomal subunit; part of the 5S rRNA/L5/L18/L25 subcomplex. Contacts the 5S rRNA. Binds to the 5S rRNA independently of L5 and L18.

In terms of biological role, this is one of the proteins that binds to the 5S RNA in the ribosome where it forms part of the central protuberance. This chain is Large ribosomal subunit protein bL25, found in Acinetobacter baumannii (strain ATCC 17978 / DSM 105126 / CIP 53.77 / LMG 1025 / NCDC KC755 / 5377).